Here is a 470-residue protein sequence, read N- to C-terminus: Homogentisate 1,2-dioxygenase (470 aa).

Fe cation contacts are provided by His-356, Glu-362, and His-392.

It belongs to the homogentisate dioxygenase family. It depends on Fe cation as a cofactor.

It carries out the reaction homogentisate + O2 = 4-maleylacetoacetate + H(+). The protein operates within amino-acid degradation; L-phenylalanine degradation; acetoacetate and fumarate from L-phenylalanine: step 4/6. The protein is Homogentisate 1,2-dioxygenase (HGO) of Oryza sativa subsp. japonica (Rice).